A 429-amino-acid chain; its full sequence is Enolase (429 aa).

(2R)-2-phosphoglycerate is bound at residue Gln163. Catalysis depends on Glu205, which acts as the Proton donor. Residues Asp242, Glu286, and Asp313 each coordinate Mg(2+). 4 residues coordinate (2R)-2-phosphoglycerate: Lys338, Arg367, Ser368, and Lys389. Lys338 functions as the Proton acceptor in the catalytic mechanism.

Belongs to the enolase family. Mg(2+) is required as a cofactor.

Its subcellular location is the cytoplasm. The protein localises to the secreted. It localises to the cell surface. The catalysed reaction is (2R)-2-phosphoglycerate = phosphoenolpyruvate + H2O. It functions in the pathway carbohydrate degradation; glycolysis; pyruvate from D-glyceraldehyde 3-phosphate: step 4/5. In terms of biological role, catalyzes the reversible conversion of 2-phosphoglycerate (2-PG) into phosphoenolpyruvate (PEP). It is essential for the degradation of carbohydrates via glycolysis. The polypeptide is Enolase (Thermoanaerobacter sp. (strain X514)).